Reading from the N-terminus, the 1103-residue chain is MPGVIMNQDNINGRGLGLHDQLNGVSSAPAGSSQLGNPVGLHNGSLPTNGVQHPDSRGSDENYRTKMMLSASGDPPELQHIVQGFFPLAKLLNRSAQQCWNDLADLVAELAEIQVPSHDSNFSPISPNTKVLGNQSPENVRKKLRALEFAQKKRGEFIKLLVLSQWSRQAADVSRLIDIQNFIRTQHQAYAGALQCMGDMKRDLVRAQVANPDLNTALEVLLRGEVVSMPDLGYRPPKPLTPKSTLKKMRKINRVISTRLALHDDIPLAFQKYRVHDGRVTFVVPGEFELDLSIGEEDVTSQFFFVDIRFLFSPSPSIPAGRMLSELDIKINDTLRNGGLSECFNWLHNLILTNKINILARQASELSRSLWSNVLRSELLHRTLVLQYWASKPNTKSWLEIGIRRGPRESTIGGMRPPSLGLRWIRDGQEVNSDDVEFDTDSLSVDRLLRSAIALHISHILSSAFRRISEKLLYSNGSLSLHAYLTRTEPGDCQLDVQLTASRRLRVAIEPLSGAIVLAATPNTLERVDTDRNMDRSTIDDIVSRVGRLRCAAAIEEVESQVKMLGFISVSPRNVRIDARSLFPANVLRFSFFWHHHWERSWLLAATSSMDGDKWWVVQTPSADSVTINRSLDAAVHHASSAVRSAQVICNLLLPAEQPDYSSLADLGHCLSGFLAIYANARFLQDLQFIKIWPHLEHLRIGPGLQVPDLNIEYEATKLPEALRVALPAGFKRKTFVKKTIRLAFHGIDRCRKVAIMVAYGNLSTSFPALGDLVAEDDHSLVLQKTGTGFALRLLASPGYPVVVALLESLQRLECVLSVYEILRRKKMDARFLSLSRLGFAYGPNKELLAQLDIGETQPQLPTEMDPLKLAFRTGHLFHYRLSISFDHSNPHRRIQGPLASNLNRPTAEAGLDTLTEILSFTLPLMQALDRFMANPSRNESSIVHVTVRNATSFQIHYPYEKCRLRLVAHQHQNQPVWVLRDVLSFQDGSCEPEFKHKLQERLYNSKGTGWRGLGNGVIAEPDHIGDLLDELDRCLASTKANTTPKALDSRTSHDAPAANNQSPAIRPEKSVEAADMHGGFVNRNLQQKAGPASQKTDVITID.

Disordered stretches follow at residues 22–61 and 1043–1067; these read LNGVSSAPAGSSQLGNPVGLHNGSLPTNGVQHPDSRGSDE and TTPKALDSRTSHDAPAANNQSPAIR. The segment covering 23 to 36 has biased composition (polar residues); the sequence is NGVSSAPAGSSQLG.

The protein belongs to the Mediator complex subunit 14 family. Component of the Mediator complex.

It is found in the nucleus. Component of the Mediator complex, a coactivator involved in the regulated transcription of nearly all RNA polymerase II-dependent genes. Mediator functions as a bridge to convey information from gene-specific regulatory proteins to the basal RNA polymerase II transcription machinery. Mediator is recruited to promoters by direct interactions with regulatory proteins and serves as a scaffold for the assembly of a functional preinitiation complex with RNA polymerase II and the general transcription factors. The polypeptide is Mediator of RNA polymerase II transcription subunit 14 (rgr1) (Emericella nidulans (strain FGSC A4 / ATCC 38163 / CBS 112.46 / NRRL 194 / M139) (Aspergillus nidulans)).